The primary structure comprises 368 residues: RNA polymerase sigma factor SigA (368 aa).

The segment at 69-90 is disordered; sequence LVNEKDSSDTDEKLNPSDLSAP. Over residues 71–83 the composition is skewed to basic and acidic residues; that stretch reads NEKDSSDTDEKLN. The tract at residues 135 to 205 is sigma-70 factor domain-2; that stretch reads LAEANLRLVV…TRAIADQART (71 aa). The short motif at 159–162 is the Interaction with polymerase core subunit RpoC element; the sequence is DLIQ. Residues 214–290 form a sigma-70 factor domain-3 region; it reads ETINKLIRVQ…DQEAQSPSDH (77 aa). The segment at 303–356 is sigma-70 factor domain-4; sequence VLDTLTDREENVLRLRFGLDDGRTRTLEEVGKVFGVTRERIRQIEAKALRKLRH. Residues 329–348 constitute a DNA-binding region (H-T-H motif); it reads LEEVGKVFGVTRERIRQIEA.

This sequence belongs to the sigma-70 factor family. RpoD/SigA subfamily. As to quaternary structure, interacts transiently with the RNA polymerase catalytic core.

Its subcellular location is the cytoplasm. Functionally, sigma factors are initiation factors that promote the attachment of RNA polymerase to specific initiation sites and are then released. This sigma factor is the primary sigma factor during exponential growth. The polypeptide is RNA polymerase sigma factor SigA (Staphylococcus aureus (strain N315)).